A 227-amino-acid chain; its full sequence is 2,3-bisphosphoglycerate-dependent phosphoglycerate mutase (227 aa).

Residues arginine 7–asparagine 14, threonine 20–glycine 21, arginine 59, glutamate 86–tyrosine 89, lysine 97, arginine 113–arginine 114, and glycine 182–asparagine 183 contribute to the substrate site. Histidine 8 acts as the Tele-phosphohistidine intermediate in catalysis. Glutamate 86 functions as the Proton donor/acceptor in the catalytic mechanism.

Belongs to the phosphoglycerate mutase family. BPG-dependent PGAM subfamily. In terms of assembly, homodimer.

It catalyses the reaction (2R)-2-phosphoglycerate = (2R)-3-phosphoglycerate. Its pathway is carbohydrate degradation; glycolysis; pyruvate from D-glyceraldehyde 3-phosphate: step 3/5. Functionally, catalyzes the interconversion of 2-phosphoglycerate and 3-phosphoglycerate. The chain is 2,3-bisphosphoglycerate-dependent phosphoglycerate mutase from Haemophilus influenzae (strain PittGG).